We begin with the raw amino-acid sequence, 356 residues long: D-alanine--D-alanine ligase (356 aa).

The 206-residue stretch at 134 to 339 folds into the ATP-grasp domain; it reads KQLFEHRGLP…YPELITKLIE (206 aa). 167 to 222 is a binding site for ATP; the sequence is NDKLNYPVFVKPANLGSSVGISKCNNEAELKEGIKEAFQFDRKLVIEQGVNAREIE. Residues D293, E306, and N308 each coordinate Mg(2+).

This sequence belongs to the D-alanine--D-alanine ligase family. Mg(2+) serves as cofactor. Requires Mn(2+) as cofactor.

It is found in the cytoplasm. It catalyses the reaction 2 D-alanine + ATP = D-alanyl-D-alanine + ADP + phosphate + H(+). It functions in the pathway cell wall biogenesis; peptidoglycan biosynthesis. Cell wall formation. This Staphylococcus aureus (strain Mu3 / ATCC 700698) protein is D-alanine--D-alanine ligase.